Here is a 175-residue protein sequence, read N- to C-terminus: Large ribosomal subunit protein uL10 (175 aa).

Belongs to the universal ribosomal protein uL10 family. In terms of assembly, part of the ribosomal stalk of the 50S ribosomal subunit. The N-terminus interacts with L11 and the large rRNA to form the base of the stalk. The C-terminus forms an elongated spine to which L12 dimers bind in a sequential fashion forming a multimeric L10(L12)X complex.

Forms part of the ribosomal stalk, playing a central role in the interaction of the ribosome with GTP-bound translation factors. This is Large ribosomal subunit protein uL10 from Synechococcus sp. (strain CC9605).